A 224-amino-acid chain; its full sequence is PHD finger-containing protein 5 (224 aa).

Residues 31-81 (KKPCEVCGSDANELLMMTCFMCRDTREHTYCARVMFQRVPRLWICEECRDF) form a PHD-type zinc finger. Cys-34, Cys-37, Cys-49, Cys-52, His-58, Cys-61, Cys-75, and Cys-78 together coordinate Zn(2+). A disordered region spans residues 116–137 (PRTNQVVDNHQDPPIDQTDPSS).

As to quaternary structure, interacts directly with AIPP3/BDT1.

In terms of biological role, together with AIPP3/BDT1, cooperates to form a BAH-PHD bivalent histone reader complex able to read histone H3 lysine 27 trimethylation (H3K27me3) histone marks in order to regulate transcription, especially to prevent early flowering; promotes AIPP3/BDT1 binding to H3K27me3. The chain is PHD finger-containing protein 5 from Arabidopsis thaliana (Mouse-ear cress).